Here is a 1009-residue protein sequence, read N- to C-terminus: Protein translocase subunit SecA (1009 aa).

ATP contacts are provided by residues glutamine 86, 104-108 (GEGKT), and aspartate 497. Disordered regions lie at residues 869–894 (AVPQ…GQQP) and 949–1009 (ERRP…RNAG). 2 stretches are compositionally biased toward low complexity: residues 883-894 (PVPAATAPGQQP) and 953-973 (SGAA…AGAG). Residues cysteine 990, cysteine 992, cysteine 1001, and histidine 1002 each contribute to the Zn(2+) site.

It belongs to the SecA family. Monomer and homodimer. Part of the essential Sec protein translocation apparatus which comprises SecA, SecYEG and auxiliary proteins SecDF. Other proteins may also be involved. Zn(2+) serves as cofactor.

Its subcellular location is the cell membrane. The protein localises to the cytoplasm. It catalyses the reaction ATP + H2O + cellular proteinSide 1 = ADP + phosphate + cellular proteinSide 2.. Functionally, part of the Sec protein translocase complex. Interacts with the SecYEG preprotein conducting channel. Has a central role in coupling the hydrolysis of ATP to the transfer of proteins into and across the cell membrane, serving as an ATP-driven molecular motor driving the stepwise translocation of polypeptide chains across the membrane. In Acidothermus cellulolyticus (strain ATCC 43068 / DSM 8971 / 11B), this protein is Protein translocase subunit SecA.